A 606-amino-acid polypeptide reads, in one-letter code: Anthranilate synthase alpha subunit 2, chloroplastic (606 aa).

A chloroplast-targeting transit peptide spans 1–49 (MESIAAATFTPSRLAARPATPAAAAAPVRARAAVAAGGRRRTSRRGGVR).

This sequence belongs to the anthranilate synthase component I family. In terms of assembly, heterotetramer consisting of two non-identical subunits: a beta subunit and a large alpha subunit.

The protein localises to the plastid. Its subcellular location is the chloroplast. It catalyses the reaction chorismate + L-glutamine = anthranilate + pyruvate + L-glutamate + H(+). It functions in the pathway amino-acid biosynthesis; L-tryptophan biosynthesis; L-tryptophan from chorismate: step 1/5. With respect to regulation, feedback inhibition by tryptophan. Its function is as follows. Part of a heterotetrameric complex that catalyzes the two-step biosynthesis of anthranilate, an intermediate in the biosynthesis of L-tryptophan. In the first step, the glutamine-binding beta subunit of anthranilate synthase (AS) provides the glutamine amidotransferase activity which generates ammonia as a substrate that, along with chorismate, is used in the second step, catalyzed by the large alpha subunit of AS to produce anthranilate. This Oryza sativa subsp. japonica (Rice) protein is Anthranilate synthase alpha subunit 2, chloroplastic.